An 81-amino-acid chain; its full sequence is Ferredoxin (81 aa).

Positions Lys2–Asp30 constitute a 4Fe-4S ferredoxin-type domain. Residues Cys11, Cys14, Cys17, and Cys61 each contribute to the [4Fe-4S] cluster site.

[4Fe-4S] cluster serves as cofactor.

Its function is as follows. Ferredoxins are iron-sulfur proteins that transfer electrons in a wide variety of metabolic reactions. This Bacillus thermoproteolyticus protein is Ferredoxin.